Consider the following 235-residue polypeptide: 2-C-methyl-D-erythritol 4-phosphate cytidylyltransferase (235 aa).

This sequence belongs to the IspD/TarI cytidylyltransferase family. IspD subfamily. In terms of assembly, homodimer.

The enzyme catalyses 2-C-methyl-D-erythritol 4-phosphate + CTP + H(+) = 4-CDP-2-C-methyl-D-erythritol + diphosphate. The protein operates within isoprenoid biosynthesis; isopentenyl diphosphate biosynthesis via DXP pathway; isopentenyl diphosphate from 1-deoxy-D-xylulose 5-phosphate: step 2/6. Functionally, catalyzes the formation of 4-diphosphocytidyl-2-C-methyl-D-erythritol from CTP and 2-C-methyl-D-erythritol 4-phosphate (MEP). The sequence is that of 2-C-methyl-D-erythritol 4-phosphate cytidylyltransferase from Blochmanniella pennsylvanica (strain BPEN).